A 116-amino-acid chain; its full sequence is Ribonuclease P protein component (116 aa).

This sequence belongs to the RnpA family. In terms of assembly, consists of a catalytic RNA component (M1 or rnpB) and a protein subunit.

The enzyme catalyses Endonucleolytic cleavage of RNA, removing 5'-extranucleotides from tRNA precursor.. RNaseP catalyzes the removal of the 5'-leader sequence from pre-tRNA to produce the mature 5'-terminus. It can also cleave other RNA substrates such as 4.5S RNA. The protein component plays an auxiliary but essential role in vivo by binding to the 5'-leader sequence and broadening the substrate specificity of the ribozyme. The sequence is that of Ribonuclease P protein component from Mycobacterium bovis (strain ATCC BAA-935 / AF2122/97).